The sequence spans 323 residues: Protein translocase subunit SecF (323 aa).

6 helical membrane-spanning segments follow: residues 19 to 39, 138 to 158, 162 to 182, 189 to 209, 244 to 264, and 269 to 289; these read GVIVSAILVLLALGLLFFKGF, ILSLILALIAIMVYVSFRYEW, LASVVALVHDVILVASSVIVF, EVIAALLTLIGYSINDTIIIF, LTVFFVVLILCVFGSKIIIGF, and LIGTIVGTYSSIFIAPKVALL.

This sequence belongs to the SecD/SecF family. SecF subfamily. As to quaternary structure, forms a complex with SecD. Part of the essential Sec protein translocation apparatus which comprises SecA, SecYEG and auxiliary proteins SecDF-YajC and YidC.

The protein localises to the cell inner membrane. In terms of biological role, part of the Sec protein translocase complex. Interacts with the SecYEG preprotein conducting channel. SecDF uses the proton motive force (PMF) to complete protein translocation after the ATP-dependent function of SecA. The sequence is that of Protein translocase subunit SecF from Helicobacter pylori (strain J99 / ATCC 700824) (Campylobacter pylori J99).